A 110-amino-acid chain; its full sequence is Nitrogenase-stabilizing/protective protein NifW (110 aa).

The protein belongs to the NifW family. As to quaternary structure, homotrimer; associates with NifD.

Functionally, may protect the nitrogenase Fe-Mo protein from oxidative damage. The sequence is that of Nitrogenase-stabilizing/protective protein NifW from Acidithiobacillus ferrooxidans (strain ATCC 23270 / DSM 14882 / CIP 104768 / NCIMB 8455) (Ferrobacillus ferrooxidans (strain ATCC 23270)).